The primary structure comprises 476 residues: UDP-N-acetylmuramate--L-alanine ligase (476 aa).

121-127 contacts ATP; it reads GAHGKTT.

It belongs to the MurCDEF family.

It is found in the cytoplasm. It carries out the reaction UDP-N-acetyl-alpha-D-muramate + L-alanine + ATP = UDP-N-acetyl-alpha-D-muramoyl-L-alanine + ADP + phosphate + H(+). Its pathway is cell wall biogenesis; peptidoglycan biosynthesis. Its function is as follows. Cell wall formation. The chain is UDP-N-acetylmuramate--L-alanine ligase from Clavibacter michiganensis subsp. michiganensis (strain NCPPB 382).